The primary structure comprises 445 residues: Exodeoxyribonuclease 7 large subunit (445 aa).

This sequence belongs to the XseA family. As to quaternary structure, heterooligomer composed of large and small subunits.

It localises to the cytoplasm. The catalysed reaction is Exonucleolytic cleavage in either 5'- to 3'- or 3'- to 5'-direction to yield nucleoside 5'-phosphates.. Its function is as follows. Bidirectionally degrades single-stranded DNA into large acid-insoluble oligonucleotides, which are then degraded further into small acid-soluble oligonucleotides. The polypeptide is Exodeoxyribonuclease 7 large subunit (Shewanella halifaxensis (strain HAW-EB4)).